The chain runs to 2223 residues: Sperm-associated antigen 17 (2223 aa).

2 stretches are compositionally biased toward basic and acidic residues: residues 144–172 (RENEKKVIEDKPKLEKDKGKAKSPKEKKA) and 200–212 (RRGEDDHTNRYID). Positions 144–214 (RENEKKVIED…DHTNRYIDDE (71 aa)) are disordered. Residues 266–295 (NQQQEVLLQSEDLEAEKLKKENAIKELKTF) are a coiled coil. Disordered regions lie at residues 387-416 (MPTSEAPQPAVPAPGKKKAQYEEPQAPPPV), 680-710 (MSVQDNESNREPSDPSQCDANNMKHSDLNNL), 731-762 (PQHESLEQTTNNEIKDDAVTKADSHEKKPKKM), 950-1015 (EERL…EPKI), 1179-1212 (GKIKGKEKPKESLKEEEHPKEEEKKEEEVEPEPV), and 1345-1378 (ETIPSEITNTKKGKSHKSQSSMAHKGEIHDPPPE). Basic and acidic residues-rich tracts occupy residues 743-756 (EIKDDAVTKADSHE), 950-999 (EERL…EQVK), and 1182-1205 (KGKEKPKESLKEEEHPKEEEKKEE). Residues 940 to 966 (WKEEQHRLAEEERLREEKKAEKKGKEA) adopt a coiled-coil conformation. Polar residues predominate over residues 1345–1354 (ETIPSEITNT). The stretch at 1874–1907 (RHTASSKRWKEKIDKTRKEIETTQNYLMDIKNRI) forms a coiled coil. 2 disordered regions span residues 1938 to 1957 (TKKNEDANETAVQDTSDLNL) and 1962 to 2008 (HKVS…SYEP). Polar residues predominate over residues 1988–1998 (TAQNQTENLTK).

In terms of assembly, interacts (via the C-terminus) with SPAG6; the interaction probably occurs on polymerized microtubules. As to expression, highly expressed in testis. Expressed in organs that contain cilia-bearing cells including brain, oviduct, lung, and uterus.

The protein resides in the cytoplasm. The protein localises to the cytoskeleton. Its subcellular location is the flagellum axoneme. It localises to the cytoplasmic vesicle. It is found in the secretory vesicle. The protein resides in the acrosome. The protein localises to the golgi apparatus. Functionally, component of the central pair apparatus of ciliary axonemes. Plays a critical role in the function and structure of motile cilia. May play a role in endochondral bone formation, most likely because of a function in primary cilia of chondrocytes and osteoblasts. Essential for normal spermatogenesis and male fertility. Required for normal manchette structure, transport of proteins along the manchette microtubules and formation of the sperm head and flagellum. Essential for sperm flagellum development and proper assembly of the respiratory motile cilia central pair apparatus, but not the brain ependymal cilia. This chain is Sperm-associated antigen 17 (SPAG17), found in Homo sapiens (Human).